The chain runs to 70 residues: ATP synthase subunit c (70 aa).

Helical transmembrane passes span 4–24 (IAAG…DGIV) and 47–67 (FIGV…ALMV).

It belongs to the ATPase C chain family. In terms of assembly, F-type ATPases have 2 components, F(1) - the catalytic core - and F(0) - the membrane proton channel. F(1) has five subunits: alpha(3), beta(3), gamma(1), delta(1), epsilon(1). F(0) has three main subunits: a(1), b(2) and c(10-14). The alpha and beta chains form an alternating ring which encloses part of the gamma chain. F(1) is attached to F(0) by a central stalk formed by the gamma and epsilon chains, while a peripheral stalk is formed by the delta and b chains.

It localises to the cell membrane. Functionally, f(1)F(0) ATP synthase produces ATP from ADP in the presence of a proton or sodium gradient. F-type ATPases consist of two structural domains, F(1) containing the extramembraneous catalytic core and F(0) containing the membrane proton channel, linked together by a central stalk and a peripheral stalk. During catalysis, ATP synthesis in the catalytic domain of F(1) is coupled via a rotary mechanism of the central stalk subunits to proton translocation. Key component of the F(0) channel; it plays a direct role in translocation across the membrane. A homomeric c-ring of between 10-14 subunits forms the central stalk rotor element with the F(1) delta and epsilon subunits. In Levilactobacillus brevis (strain ATCC 367 / BCRC 12310 / CIP 105137 / JCM 1170 / LMG 11437 / NCIMB 947 / NCTC 947) (Lactobacillus brevis), this protein is ATP synthase subunit c.